Here is a 173-residue protein sequence, read N- to C-terminus: Alkyl hydroperoxide reductase AhpD (173 aa).

Cys131 functions as the Proton donor in the catalytic mechanism. A disulfide bridge connects residues Cys131 and Cys134. Residue Cys134 is the Cysteine sulfenic acid (-SOH) intermediate of the active site.

It belongs to the AhpD family.

It catalyses the reaction N(6)-[(R)-dihydrolipoyl]-L-lysyl-[lipoyl-carrier protein] + a hydroperoxide = N(6)-[(R)-lipoyl]-L-lysyl-[lipoyl-carrier protein] + an alcohol + H2O. Antioxidant protein with alkyl hydroperoxidase activity. Required for the reduction of the AhpC active site cysteine residues and for the regeneration of the AhpC enzyme activity. In Maricaulis maris (strain MCS10) (Caulobacter maris), this protein is Alkyl hydroperoxide reductase AhpD.